The primary structure comprises 258 residues: Phosphate import ATP-binding protein PstB (258 aa).

In terms of domain architecture, ABC transporter spans 5 to 247; the sequence is LDLKDVNIYY…EKIFSNPRQK (243 aa). Residue 37–44 participates in ATP binding; that stretch reads GPSGCGKS.

Belongs to the ABC transporter superfamily. Phosphate importer (TC 3.A.1.7) family. The complex is composed of two ATP-binding proteins (PstB), two transmembrane proteins (PstC and PstA) and a solute-binding protein (PstS).

The protein localises to the cell membrane. It carries out the reaction phosphate(out) + ATP + H2O = ADP + 2 phosphate(in) + H(+). Functionally, part of the ABC transporter complex PstSACB involved in phosphate import. Responsible for energy coupling to the transport system. This is Phosphate import ATP-binding protein PstB from Mycolicibacterium smegmatis (Mycobacterium smegmatis).